The following is a 209-amino-acid chain: Large ribosomal subunit protein uL3c (209 aa).

The tract at residues 132-154 (PMSHGSKNHRLPGSIGAGSTPGR) is disordered.

The protein belongs to the universal ribosomal protein uL3 family. In terms of assembly, part of the 50S ribosomal subunit.

It localises to the plastid. The protein localises to the cyanelle. One of the primary rRNA binding proteins, it binds directly near the 3'-end of the 23S rRNA, where it nucleates assembly of the 50S subunit. This Cyanophora paradoxa protein is Large ribosomal subunit protein uL3c (rpl3).